A 148-amino-acid chain; its full sequence is NADPH-dependent 7-cyano-7-deazaguanine reductase (148 aa).

The active-site Thioimide intermediate is the Cys50. The active-site Proton donor is the Asp57. Residues 72–74 (VES) and 91–92 (HE) each bind substrate.

It belongs to the GTP cyclohydrolase I family. QueF type 1 subfamily.

It is found in the cytoplasm. The catalysed reaction is 7-aminomethyl-7-carbaguanine + 2 NADP(+) = 7-cyano-7-deazaguanine + 2 NADPH + 3 H(+). It participates in tRNA modification; tRNA-queuosine biosynthesis. Catalyzes the NADPH-dependent reduction of 7-cyano-7-deazaguanine (preQ0) to 7-aminomethyl-7-deazaguanine (preQ1). The chain is NADPH-dependent 7-cyano-7-deazaguanine reductase from Helicobacter pylori (strain P12).